The sequence spans 461 residues: Aspartic proteinase NANA, chloroplast (461 aa).

A glycan (N-linked (GlcNAc...) asparagine) is linked at N86. A Peptidase A1 domain is found at 106–456; it reads YFTEIRVGTP…DLMASTLSFA (351 aa). D124 is a catalytic residue. N274 carries an N-linked (GlcNAc...) asparagine glycan. Residue D338 is part of the active site. N-linked (GlcNAc...) asparagine glycosylation is present at N386.

It belongs to the peptidase A1 family.

It localises to the plastid. The protein resides in the chloroplast. With respect to regulation, repressed by pepstatin A. In terms of biological role, aspartic proteinase that can use azocasein as substrate and regulates endogenous sugar levels (e.g. sucrose, glucose and fructose) by modulating starch accumulation and remobilization. Influences general morphology and development. The sequence is that of Aspartic proteinase NANA, chloroplast from Arabidopsis thaliana (Mouse-ear cress).